A 208-amino-acid chain; its full sequence is V-type ATP synthase subunit E (208 aa).

Belongs to the V-ATPase E subunit family.

Functionally, produces ATP from ADP in the presence of a proton gradient across the membrane. The protein is V-type ATP synthase subunit E of Chlamydia trachomatis serovar A (strain ATCC VR-571B / DSM 19440 / HAR-13).